The chain runs to 175 residues: Transcription factor HES-3 (175 aa).

Positions 1–49 (MEKKRRARINLSLEQLRSLLERHYSHQIRKRKLEKADILELSVKYVRSL) constitute a bHLH domain. Positions 65-98 (YPSGFRGGLPGSSQRLRPGEDDSGLRCPLLLQRR) constitute an Orange domain. Residues 124 to 145 (PGPPAGGSQSPQSPFPPLGGLL) are compositionally biased toward low complexity. The interval 124 to 175 (PGPPAGGSQSPQSPFPPLGGLLESSTGILAPPPASNCQAENPRPGFRVWRPW) is disordered. The WRPW motif motif lies at 172–175 (WRPW).

As to quaternary structure, transcription repression requires formation of a complex with a corepressor protein of the Groucho/TLE family. In terms of tissue distribution, expressed exclusively in Purkinje cells.

The protein resides in the nucleus. Transcriptional repressor of genes that require a bHLH protein for their transcription. This chain is Transcription factor HES-3 (Hes3), found in Rattus norvegicus (Rat).